The chain runs to 375 residues: Histidine biosynthesis bifunctional protein HisB (375 aa).

Positions 1-168 are histidinol-phosphatase; that stretch reads MTPILFVDRD…GIAHELADAP (168 aa). Asp-8 (nucleophile) is an active-site residue. Residues Asp-8, Asp-10, and Asp-128 each coordinate Mg(2+). Residue Asp-10 is the Proton donor of the active site. The interval 169-375 is imidazoleglycerol-phosphate dehydratase; the sequence is RRAVVQRNTK…TALPSTKGAL (207 aa).

It in the N-terminal section; belongs to the histidinol-phosphatase family. This sequence in the C-terminal section; belongs to the imidazoleglycerol-phosphate dehydratase family. It depends on Mg(2+) as a cofactor.

The protein localises to the cytoplasm. The enzyme catalyses D-erythro-1-(imidazol-4-yl)glycerol 3-phosphate = 3-(imidazol-4-yl)-2-oxopropyl phosphate + H2O. The catalysed reaction is L-histidinol phosphate + H2O = L-histidinol + phosphate. It participates in amino-acid biosynthesis; L-histidine biosynthesis; L-histidine from 5-phospho-alpha-D-ribose 1-diphosphate: step 6/9. It functions in the pathway amino-acid biosynthesis; L-histidine biosynthesis; L-histidine from 5-phospho-alpha-D-ribose 1-diphosphate: step 8/9. In Xanthomonas campestris pv. campestris (strain 8004), this protein is Histidine biosynthesis bifunctional protein HisB.